The following is a 201-amino-acid chain: Imidazole glycerol phosphate synthase subunit HisH 1 (201 aa).

One can recognise a Glutamine amidotransferase type-1 domain in the interval 1 to 201; the sequence is MIALIDYKAG…LKLLENFARL (201 aa). Catalysis depends on Cys80, which acts as the Nucleophile. Active-site residues include His183 and Glu185.

Heterodimer of HisH and HisF.

It localises to the cytoplasm. The enzyme catalyses 5-[(5-phospho-1-deoxy-D-ribulos-1-ylimino)methylamino]-1-(5-phospho-beta-D-ribosyl)imidazole-4-carboxamide + L-glutamine = D-erythro-1-(imidazol-4-yl)glycerol 3-phosphate + 5-amino-1-(5-phospho-beta-D-ribosyl)imidazole-4-carboxamide + L-glutamate + H(+). The catalysed reaction is L-glutamine + H2O = L-glutamate + NH4(+). It participates in amino-acid biosynthesis; L-histidine biosynthesis; L-histidine from 5-phospho-alpha-D-ribose 1-diphosphate: step 5/9. IGPS catalyzes the conversion of PRFAR and glutamine to IGP, AICAR and glutamate. The HisH subunit provides the glutamine amidotransferase activity that produces the ammonia necessary to HisF for the synthesis of IGP and AICAR. This chain is Imidazole glycerol phosphate synthase subunit HisH 1 (hisH1), found in Campylobacter jejuni subsp. jejuni serotype O:23/36 (strain 81-176).